We begin with the raw amino-acid sequence, 232 residues long: 5'-methylthioadenosine/S-adenosylhomocysteine nucleosidase (232 aa).

The active-site Proton acceptor is the Glu-12. Substrate-binding positions include Gly-78, Ile-152, and 173 to 174 (ME). Catalysis depends on Asp-197, which acts as the Proton donor.

The protein belongs to the PNP/UDP phosphorylase family. MtnN subfamily. Homodimer.

It carries out the reaction S-adenosyl-L-homocysteine + H2O = S-(5-deoxy-D-ribos-5-yl)-L-homocysteine + adenine. The catalysed reaction is S-methyl-5'-thioadenosine + H2O = 5-(methylsulfanyl)-D-ribose + adenine. The enzyme catalyses 5'-deoxyadenosine + H2O = 5-deoxy-D-ribose + adenine. It participates in amino-acid biosynthesis; L-methionine biosynthesis via salvage pathway; S-methyl-5-thio-alpha-D-ribose 1-phosphate from S-methyl-5'-thioadenosine (hydrolase route): step 1/2. Catalyzes the irreversible cleavage of the glycosidic bond in both 5'-methylthioadenosine (MTA) and S-adenosylhomocysteine (SAH/AdoHcy) to adenine and the corresponding thioribose, 5'-methylthioribose and S-ribosylhomocysteine, respectively. Also cleaves 5'-deoxyadenosine, a toxic by-product of radical S-adenosylmethionine (SAM) enzymes, into 5-deoxyribose and adenine. Thus, is required for in vivo function of the radical SAM enzymes biotin synthase and lipoic acid synthase, that are inhibited by 5'-deoxyadenosine accumulation. In Escherichia coli O7:K1 (strain IAI39 / ExPEC), this protein is 5'-methylthioadenosine/S-adenosylhomocysteine nucleosidase.